The chain runs to 345 residues: Anthranilate phosphoribosyltransferase (345 aa).

Residues Gly84, 87–88 (GD), Thr92, 94–97 (NIST), 112–120 (KHGGRGVSS), and Ser124 each bind 5-phospho-alpha-D-ribose 1-diphosphate. Anthranilate is bound at residue Gly84. Ser96 contacts Mg(2+). Residue Arg170 participates in anthranilate binding. Mg(2+) is bound by residues Asp229 and Glu230.

It belongs to the anthranilate phosphoribosyltransferase family. In terms of assembly, homodimer. Mg(2+) is required as a cofactor.

The catalysed reaction is N-(5-phospho-beta-D-ribosyl)anthranilate + diphosphate = 5-phospho-alpha-D-ribose 1-diphosphate + anthranilate. It functions in the pathway amino-acid biosynthesis; L-tryptophan biosynthesis; L-tryptophan from chorismate: step 2/5. Functionally, catalyzes the transfer of the phosphoribosyl group of 5-phosphorylribose-1-pyrophosphate (PRPP) to anthranilate to yield N-(5'-phosphoribosyl)-anthranilate (PRA). This chain is Anthranilate phosphoribosyltransferase, found in Paracidovorax citrulli (strain AAC00-1) (Acidovorax citrulli).